The following is a 60-amino-acid chain: Large ribosomal subunit protein bL32 (60 aa).

It belongs to the bacterial ribosomal protein bL32 family.

The chain is Large ribosomal subunit protein bL32 from Oenococcus oeni (strain ATCC BAA-331 / PSU-1).